We begin with the raw amino-acid sequence, 312 residues long: Formate dehydrogenase iron-sulfur subunit (312 aa).

4 consecutive 4Fe-4S ferredoxin-type domains span residues 35–65 (IAKL…SDIN), 97–129 (LEWL…QYAN), 130–159 (GIVD…MNPE), and 164–195 (YKCT…FGSK). The [4Fe-4S] cluster site is built by cysteine 44, cysteine 47, cysteine 50, cysteine 54, cysteine 106, cysteine 109, cysteine 114, cysteine 118, cysteine 139, cysteine 142, cysteine 145, cysteine 149, cysteine 166, cysteine 169, cysteine 181, and cysteine 185.

In terms of assembly, formate dehydrogenase is a membrane-bound complex, formed by subunits alpha, beta and gamma. [4Fe-4S] cluster serves as cofactor.

Its subcellular location is the cell membrane. In terms of biological role, allows to use formate as major electron donor during aerobic respiration. The beta chain is an electron transfer unit containing 4 cysteine clusters involved in the formation of iron-sulfur centers. Electrons are transferred from the gamma chain to the molybdenum cofactor of the alpha subunit. This Haemophilus influenzae (strain ATCC 51907 / DSM 11121 / KW20 / Rd) protein is Formate dehydrogenase iron-sulfur subunit (fdxH).